Here is a 436-residue protein sequence, read N- to C-terminus: MDYTTQMDAAKKNVTTKEMEVVAEKEQMEISELKMLMAEGKIVIPANKNHKSLSAEGVGQGLKTKINVNLGISKDCQNVDMEMKKVEIAIAMKAEAIMDLSSFGKTEEFRKKLINMSKAMIGTVPIYDAIGFYDKELKDITAEEMIGVVEKQAKEGVDFMTIHAGINRETAETFKRNKRAMNIVSRGGSLLYAWMELNNKENPFYEYYDKILDICEKYDVTISLGDACRPGCIDDSTDASQITELIKLGELTKRAWDRNVQVMVEGPGHMALNEIQSNMIIEKKLCHGAPFYVLGPIVTDIAPGYDHITSAIGGAVAAASGADFLCYVTPAEHLRLPNIEDMKEGIVASKIAAHAADIAKNVKGARDWDNKMAEARQKLDWKAMFDLSIDPEKAIRYRKESTPEDPDTCTMCGKMCSVRNMNKVMAGKDVNILRED.

Substrate is bound by residues Asn69, Met98, Tyr127, His163, 185–187, 226–229, and Glu265; these read SRG and DACR. His269 serves as a coordination point for Zn(2+). Tyr292 is a substrate binding site. Residue His333 coordinates Zn(2+). Residues Cys409, Cys412, and Cys416 each contribute to the [4Fe-4S] cluster site.

This sequence belongs to the ThiC family. Requires [4Fe-4S] cluster as cofactor.

The enzyme catalyses 5-amino-1-(5-phospho-beta-D-ribosyl)imidazole + S-adenosyl-L-methionine = 4-amino-2-methyl-5-(phosphooxymethyl)pyrimidine + CO + 5'-deoxyadenosine + formate + L-methionine + 3 H(+). The protein operates within cofactor biosynthesis; thiamine diphosphate biosynthesis. Catalyzes the synthesis of the hydroxymethylpyrimidine phosphate (HMP-P) moiety of thiamine from aminoimidazole ribotide (AIR) in a radical S-adenosyl-L-methionine (SAM)-dependent reaction. This chain is Phosphomethylpyrimidine synthase, found in Clostridium acetobutylicum (strain ATCC 824 / DSM 792 / JCM 1419 / IAM 19013 / LMG 5710 / NBRC 13948 / NRRL B-527 / VKM B-1787 / 2291 / W).